The chain runs to 201 residues: Putative manganese efflux pump MntP 2 (201 aa).

Helical transmembrane passes span 3-23 (LISVILISIGLSMDAFAVSIT), 39-59 (IGLFFGGFQALMPLIGWSIGI), 65-85 (IAALDHWIALILLSIIGGKMI), 116-136 (LILLAIATSIDALAVGVSFAF), 141-161 (IINTIVIIGSITFVICFIGVM), and 176-196 (ILGGVVLILIGVKIFIQHTNI).

It belongs to the MntP (TC 9.B.29) family.

Its subcellular location is the cell membrane. Its function is as follows. Probably functions as a manganese efflux pump. The chain is Putative manganese efflux pump MntP 2 from Clostridium botulinum (strain Langeland / NCTC 10281 / Type F).